The primary structure comprises 488 residues: Rhamnulokinase (488 aa).

13 to 17 is a binding site for ATP; sequence ASSGR. Cys-68 and Cys-222 are disulfide-bonded. Substrate is bound by residues Gly-83 and 236–238; that span reads HDT. Asp-237 serves as the catalytic Proton acceptor. Thr-259 provides a ligand contact to ATP. Residue Asn-296 coordinates substrate. Gln-304 lines the ATP pocket. The cysteines at positions 353 and 370 are disulfide-linked. Residue Gly-402 participates in ATP binding. An intrachain disulfide couples Cys-413 to Cys-417.

This sequence belongs to the rhamnulokinase family. Requires Mg(2+) as cofactor.

The catalysed reaction is L-rhamnulose + ATP = L-rhamnulose 1-phosphate + ADP + H(+). It functions in the pathway carbohydrate degradation; L-rhamnose degradation; glycerone phosphate from L-rhamnose: step 2/3. In terms of biological role, involved in the catabolism of L-rhamnose (6-deoxy-L-mannose). Catalyzes the transfer of the gamma-phosphate group from ATP to the 1-hydroxyl group of L-rhamnulose to yield L-rhamnulose 1-phosphate. This is Rhamnulokinase from Klebsiella pneumoniae subsp. pneumoniae (strain ATCC 700721 / MGH 78578).